The chain runs to 122 residues: Autophagy-related protein 8e (122 aa).

Glycine 118 carries Phosphatidylethanolamine amidated glycine lipidation. Residues 119-122 (ASSI) constitute a propeptide, removed in mature form.

This sequence belongs to the ATG8 family. As to quaternary structure, interacts with ATG4. Interacts with SH3P2. Interacts with ATG1A and ATG11. Binds to ATG1A and ATG11 on autophagic vesicles. Post-translationally, the C-terminal 4 residues are removed by ATG4 to expose Gly-118 at the C-terminus. This Gly-118 forms then a thioester bond with the 'Cys-558' of ATG7 (E1-like activating enzyme) before being transferred to the 'Cys-258' of ATG3 (the specific E2 conjugating enzyme), in order to be finally amidated with phosphatidylethanolamine. This lipid modification anchors ATG8 to autophagosomes. Constitutively expressed.

It is found in the cytoplasmic vesicle. The protein resides in the autophagosome membrane. The protein localises to the vacuole membrane. It localises to the cytoplasm. Its subcellular location is the cytoskeleton. Ubiquitin-like modifier involved in autophagosomes formation. May mediate the delivery of the autophagosomes to the vacuole via the microtubule cytoskeleton. The polypeptide is Autophagy-related protein 8e (ATG8E) (Arabidopsis thaliana (Mouse-ear cress)).